The sequence spans 556 residues: Formate--tetrahydrofolate ligase (556 aa).

Thr65–Thr72 provides a ligand contact to ATP.

The protein belongs to the formate--tetrahydrofolate ligase family.

It catalyses the reaction (6S)-5,6,7,8-tetrahydrofolate + formate + ATP = (6R)-10-formyltetrahydrofolate + ADP + phosphate. It functions in the pathway one-carbon metabolism; tetrahydrofolate interconversion. The chain is Formate--tetrahydrofolate ligase from Symbiobacterium thermophilum (strain DSM 24528 / JCM 14929 / IAM 14863 / T).